Consider the following 316-residue polypeptide: Olfactory receptor 2K2 (316 aa).

The Extracellular segment spans residues 1–20 (MQGENFTIWSIFFLEGFSQY). N-linked (GlcNAc...) asparagine glycosylation is present at Asn-5. A helical membrane pass occupies residues 21 to 41 (PGLEVVLFVFSLVMYLTTLLG). Topologically, residues 42-65 (NSTLILITILDSRLKTPMYLFLGN) are cytoplasmic. A helical transmembrane segment spans residues 66 to 86 (LSFMDICYTSASVPTLLVNLL). Residues 87–97 (SSQKTIIFSGC) lie on the Extracellular side of the membrane. A disulfide bridge connects residues Cys-97 and Cys-188. A helical transmembrane segment spans residues 98 to 118 (AVQMYLSLAMGSTECVLLAVM). At 119-143 (AYDRYVAICNPLRYSIIMNRCVCAR) the chain is on the cytoplasmic side. The chain crosses the membrane as a helical span at residues 144 to 164 (MATVSWVTGCLTALLETSFAL). Residues 165-199 (QIPLCGNLIDHFTCEILAVLKLACTSSLLMNTIML) are Extracellular-facing. A helical transmembrane segment spans residues 200-220 (VVSILLLPIPMLLVCISYIFI). Topologically, residues 221–238 (LSTILRITSAEGRNKAFS) are cytoplasmic. The chain crosses the membrane as a helical span at residues 239–259 (TCGAHLTVVILYYGAALSMYL). The Extracellular portion of the chain corresponds to 260-270 (KPSSSNAQKID). A helical transmembrane segment spans residues 271–291 (KIISLLYGVLTPMLNPIIYSL). Over 292 to 316 (RNKEVKDAMKKLLGKITLHQTHEHL) the chain is Cytoplasmic.

This sequence belongs to the G-protein coupled receptor 1 family.

It is found in the cell membrane. Odorant receptor. The chain is Olfactory receptor 2K2 (OR2K2) from Homo sapiens (Human).